The sequence spans 332 residues: MSEDPDRGNGTKTYLSDDIDEARAIGSDLYYPHEVRVLGDEHIFQMRMTAASFGPVTLGRLDYSTEVEIFTNELRDSYHVNIPMRGELVTGSGRARTVATPHRAAVYRCDQRTLLRGWASPYPTPVLALKIDRRALEDQLAARLGSEIVDPIVFGMDLDLDTVVGRQWLSLVEGLSHQLDSPEALALHPIVSTPMAECLMSGLLVAAEHDYRARLYEPKPALPGIVRLAVDYLEAHAQQPLTVAQVARNVGVSVRSLQVGFQNSLGTTPMRQLKIIRMQKARKDLLRADPASEGVTEIAQRWGFLHVGRFAGEYKQTFGVSPSEDLRTVPFR.

In terms of domain architecture, HTH araC/xylS-type spans 227-328 (RLAVDYLEAH…GVSPSEDLRT (102 aa)). DNA-binding regions (H-T-H motif) lie at residues 244–265 (AQVA…QNSL) and 295–318 (VTEI…KQTF).

Functionally, probably involved in the positive regulation of the thc operon for the degradation of the thiocarbamate herbicide EPTC. The polypeptide is Probable thc operon regulatory protein (thcR) (Rhodococcus erythropolis (Arthrobacter picolinophilus)).